The following is a 117-amino-acid chain: RutC family protein HD_0322 (117 aa).

It belongs to the RutC family.

The protein is RutC family protein HD_0322 of Haemophilus ducreyi (strain 35000HP / ATCC 700724).